The chain runs to 106 residues: Nucleoid-associated protein XOO1065 (106 aa).

The segment covering lysine 80–methionine 89 has biased composition (basic and acidic residues). Positions lysine 80–phenylalanine 106 are disordered.

It belongs to the YbaB/EbfC family. As to quaternary structure, homodimer.

It is found in the cytoplasm. Its subcellular location is the nucleoid. In terms of biological role, binds to DNA and alters its conformation. May be involved in regulation of gene expression, nucleoid organization and DNA protection. The polypeptide is Nucleoid-associated protein XOO1065 (Xanthomonas oryzae pv. oryzae (strain KACC10331 / KXO85)).